A 473-amino-acid chain; its full sequence is Cytochrome c-552 (473 aa).

A signal peptide spans 1 to 33 (MQHGDEMMKKMTGKSFALSALVAASFMAAGAMA). His-93 contacts heme c. 3 residues coordinate heme: Cys-121, Cys-124, and Lys-125. 6 residues coordinate heme c: Cys-159, Cys-162, His-163, Cys-201, Cys-204, and His-205. The Ca(2+) site is built by Glu-207, Tyr-208, Lys-256, and Gln-258. Tyr-208 lines the substrate pocket. His-259 is a binding site for substrate. Heme c contacts are provided by His-270, Cys-277, Cys-280, His-281, His-296, Cys-309, Cys-312, His-313, and His-388.

It belongs to the cytochrome c-552 family. Requires Ca(2+) as cofactor. It depends on heme c as a cofactor.

Its subcellular location is the periplasm. The catalysed reaction is 6 Fe(III)-[cytochrome c] + NH4(+) + 2 H2O = 6 Fe(II)-[cytochrome c] + nitrite + 8 H(+). It functions in the pathway nitrogen metabolism; nitrate reduction (assimilation). In terms of biological role, catalyzes the reduction of nitrite to ammonia, consuming six electrons in the process. The sequence is that of Cytochrome c-552 from Shewanella sp. (strain ANA-3).